The chain runs to 521 residues: Ribonuclease Y 1 (521 aa).

A helical membrane pass occupies residues 1 to 21 (MEIVISAIIGLLIGGTVVFVI). The tract at residues 51-87 (IKKESENKAKDFESRARKNVEQDIHKQKSTLKNKESQ) is disordered. The KH domain maps to 211-271 (TVSVLALPND…VRRELARRTI (61 aa)). The HD domain maps to 337–430 (ALNQSLEVAT…VHAAYTLSSS (94 aa)).

This sequence belongs to the RNase Y family.

It localises to the cell membrane. Functionally, endoribonuclease that initiates mRNA decay. This is Ribonuclease Y 1 from Bdellovibrio bacteriovorus (strain ATCC 15356 / DSM 50701 / NCIMB 9529 / HD100).